Here is a 132-residue protein sequence, read N- to C-terminus: Large ribosomal subunit protein uL14 (132 aa).

It belongs to the universal ribosomal protein uL14 family. Part of the 50S ribosomal subunit. Forms a cluster with proteins L3 and L24e, part of which may contact the 16S rRNA in 2 intersubunit bridges.

Its function is as follows. Binds to 23S rRNA. Forms part of two intersubunit bridges in the 70S ribosome. The chain is Large ribosomal subunit protein uL14 from Methanococcus maripaludis (strain C5 / ATCC BAA-1333).